A 204-amino-acid polypeptide reads, in one-letter code: MNLCDLFDEIIIGIIDELSDRDKIKFMTTCSRFYYFIDKTKYFDIYDYNKISHLTFIEKIRNIKFYAVNDEIPSNTTHLILSDKYIGSLKNPLPNLKYIKLTNYQYLFLSKNILPHIEIDKNYKNPHIDSSRKEYFDETLIGLRPDCTFWRHNYNIKKSDNETNKITNNHTNKKINNNKKHQNNQKQIIQKNIKFPKILSKHKH.

One can recognise an F-box domain in the interval 1-46 (MNLCDLFDEIIIGIIDELSDRDKIKFMTTCSRFYYFIDKTKYFDIY). A disordered region spans residues 161–184 (NETNKITNNHTNKKINNNKKHQNN). The span at 171–183 (TNKKINNNKKHQN) shows a compositional bias: basic residues.

This Acanthamoeba polyphaga (Amoeba) protein is Putative F-box protein L168.